Consider the following 74-residue polypeptide: Protein SlyX homolog (74 aa).

This sequence belongs to the SlyX family.

This is Protein SlyX homolog from Aliivibrio fischeri (strain ATCC 700601 / ES114) (Vibrio fischeri).